The following is a 364-amino-acid chain: Lipoyl synthase, chloroplastic (364 aa).

The transit peptide at 1–70 (MEQTLFNPSI…PNVKKPEWLR (70 aa)) directs the protein to the chloroplast. The span at 32–52 (STNSPSSNTKTTTVTVPSKKT) shows a compositional bias: low complexity. Residues 32 to 64 (STNSPSSNTKTTTVTVPSKKTMGPYTGRDPNVK) are disordered. 7 residues coordinate [4Fe-4S] cluster: C95, C100, C106, C126, C130, C133, and S341. Positions 109–330 (GGGDGIATAT…KEYGESIGFR (222 aa)) constitute a Radical SAM core domain.

The protein belongs to the radical SAM superfamily. Lipoyl synthase family. The cofactor is [4Fe-4S] cluster.

The protein localises to the plastid. It localises to the chloroplast. It catalyses the reaction [[Fe-S] cluster scaffold protein carrying a second [4Fe-4S](2+) cluster] + N(6)-octanoyl-L-lysyl-[protein] + 2 oxidized [2Fe-2S]-[ferredoxin] + 2 S-adenosyl-L-methionine + 4 H(+) = [[Fe-S] cluster scaffold protein] + N(6)-[(R)-dihydrolipoyl]-L-lysyl-[protein] + 4 Fe(3+) + 2 hydrogen sulfide + 2 5'-deoxyadenosine + 2 L-methionine + 2 reduced [2Fe-2S]-[ferredoxin]. It functions in the pathway protein modification; protein lipoylation via endogenous pathway; protein N(6)-(lipoyl)lysine from octanoyl-[acyl-carrier-protein]: step 2/2. Catalyzes the radical-mediated insertion of two sulfur atoms into the C-6 and C-8 positions of the octanoyl moiety bound to the lipoyl domains of lipoate-dependent enzymes, thereby converting the octanoylated domains into lipoylated derivatives. The chain is Lipoyl synthase, chloroplastic from Ricinus communis (Castor bean).